The chain runs to 224 residues: Ribose-5-phosphate isomerase A (224 aa).

Residues 32-35 (TGST), 85-88 (DGAD), and 98-101 (KGGG) each bind substrate. Glutamate 107 functions as the Proton acceptor in the catalytic mechanism. Lysine 125 provides a ligand contact to substrate.

It belongs to the ribose 5-phosphate isomerase family. Homodimer.

It carries out the reaction aldehydo-D-ribose 5-phosphate = D-ribulose 5-phosphate. The protein operates within carbohydrate degradation; pentose phosphate pathway; D-ribose 5-phosphate from D-ribulose 5-phosphate (non-oxidative stage): step 1/1. Catalyzes the reversible conversion of ribose-5-phosphate to ribulose 5-phosphate. The polypeptide is Ribose-5-phosphate isomerase A (Pseudomonas putida (strain W619)).